A 76-amino-acid chain; its full sequence is uncharacterized protein (76 aa).

The region spanning 6 to 60 (LKKNRLEKGFTQEEVAKAAQIGRAYYTMIENGTRKPSVIVSKKIGEKLGFDWTIF) is the HTH cro/C1-type domain. The H-T-H motif DNA-binding region spans 17–36 (QEEVAKAAQIGRAYYTMIEN).

This is an uncharacterized protein from Bacillus subtilis (strain 168).